Consider the following 146-residue polypeptide: Large ribosomal subunit protein uL15 (146 aa).

Residues 1–13 (MKLHELKPAEGSR) show a composition bias toward basic and acidic residues. The tract at residues 1–48 (MKLHELKPAEGSRKVRNRVGRGIGSGNGKTAGKGHKGQNARSGGGVRL) is disordered. The segment covering 21–31 (RGIGSGNGKTA) has biased composition (gly residues).

This sequence belongs to the universal ribosomal protein uL15 family. Part of the 50S ribosomal subunit.

Binds to the 23S rRNA. The protein is Large ribosomal subunit protein uL15 of Bacillus cytotoxicus (strain DSM 22905 / CIP 110041 / 391-98 / NVH 391-98).